The chain runs to 507 residues: Histidine ammonia-lyase (507 aa).

The segment at residues 141-143 is a cross-link (5-imidazolinone (Ala-Gly)); sequence ASG. The residue at position 142 (Ser142) is a 2,3-didehydroalanine (Ser).

The protein belongs to the PAL/histidase family. In terms of processing, contains an active site 4-methylidene-imidazol-5-one (MIO), which is formed autocatalytically by cyclization and dehydration of residues Ala-Ser-Gly.

It is found in the cytoplasm. The enzyme catalyses L-histidine = trans-urocanate + NH4(+). The protein operates within amino-acid degradation; L-histidine degradation into L-glutamate; N-formimidoyl-L-glutamate from L-histidine: step 1/3. This is Histidine ammonia-lyase from Burkholderia pseudomallei (strain 1106a).